The chain runs to 511 residues: 2-isopropylmalate synthase (511 aa).

Positions 5–267 constitute a Pyruvate carboxyltransferase domain; it reads LIIFDTTLRD…DTNIDTMHIL (263 aa). Residues Asp-14, His-202, His-204, and Asn-238 each coordinate Mn(2+). Residues 393-511 form a regulatory domain region; it reads KLVSLKVCTE…TVTNKAHPQI (119 aa).

The protein belongs to the alpha-IPM synthase/homocitrate synthase family. LeuA type 1 subfamily. Homodimer. The cofactor is Mn(2+).

The protein localises to the cytoplasm. It catalyses the reaction 3-methyl-2-oxobutanoate + acetyl-CoA + H2O = (2S)-2-isopropylmalate + CoA + H(+). It functions in the pathway amino-acid biosynthesis; L-leucine biosynthesis; L-leucine from 3-methyl-2-oxobutanoate: step 1/4. In terms of biological role, catalyzes the condensation of the acetyl group of acetyl-CoA with 3-methyl-2-oxobutanoate (2-ketoisovalerate) to form 3-carboxy-3-hydroxy-4-methylpentanoate (2-isopropylmalate). This chain is 2-isopropylmalate synthase, found in Vesicomyosocius okutanii subsp. Calyptogena okutanii (strain HA).